The primary structure comprises 149 residues: Alpha-crystallin A chain (149 aa).

A sHSP domain is found at 41 to 149 (LFRSVLESGI…DASHGERPIP (109 aa)). H89, E91, H96, and H143 together coordinate Zn(2+).

It belongs to the small heat shock protein (HSP20) family. Heteropolymer composed of three CRYAA and one CRYAB subunits. Inter-subunit bridging via zinc ions enhances stability, which is crucial as there is no protein turn over in the lens. Can also form homodimers and homotetramers (dimers of dimers) which serve as the building blocks of homooligomers. Within homooligomers, the zinc-binding motif is created from residues of 3 different molecules. His-89 and Glu-91 from one molecule are ligands of the zinc ion, and His-96 and His-143 residues from additional molecules complete the site with tetrahedral coordination geometry. Part of a complex required for lens intermediate filament formation composed of BFSP1, BFSP2 and CRYAA.

It localises to the cytoplasm. Its subcellular location is the nucleus. Functionally, contributes to the transparency and refractive index of the lens. May act as a chaperone, preventing aggregation of various proteins under a wide range of stress conditions. This Columba livia (Rock dove) protein is Alpha-crystallin A chain (CRYAA).